We begin with the raw amino-acid sequence, 371 residues long: MEPSLIDVRRALHRIPELGFEEYKTQTYLLDLIQSLPQDFLEVKTWKTGILVRVGGRKGEKTVAYRADMDGLPITEETGLPFVSQHEGRMHACGHDLHMTIAFGLLRHFAYHQPETHLLFIFQPAEEGPGGAKPMLDSEEFRMWWPDEIIALHIAPEYPVGTIATRKGLLFANTSELFIDLKGQGGHAAYPHLANDMVVAASHLVTQLQSVVSRNVDPLDSAVVTIGVIKGGTKQNIIAETARIEGTIRTLSIESMKKVKKRIEALVSGIEIGFSCQASIDYGSNYCQVWNDEERVARFIEYSQGREGVTFIECSEAMTGEDFGYFLEEIPGFMFWLGVDTNYGLHDARLNPNEDVLSFAVQHLIGYIETL.

The active site involves Asp-68. Glu-127 serves as the catalytic Proton acceptor.

It belongs to the peptidase M20A family. N-acetyldiaminopimelate deacetylase subfamily.

The enzyme catalyses N-acetyl-(2S,6S)-2,6-diaminopimelate + H2O = (2S,6S)-2,6-diaminopimelate + acetate. The protein operates within amino-acid biosynthesis; L-lysine biosynthesis via DAP pathway; LL-2,6-diaminopimelate from (S)-tetrahydrodipicolinate (acetylase route): step 3/3. Catalyzes the conversion of N-acetyl-diaminopimelate to diaminopimelate and acetate. In Halalkalibacterium halodurans (strain ATCC BAA-125 / DSM 18197 / FERM 7344 / JCM 9153 / C-125) (Bacillus halodurans), this protein is N-acetyldiaminopimelate deacetylase.